The chain runs to 401 residues: Nicotinate phosphoribosyltransferase (401 aa).

His-221 carries the phosphohistidine; by autocatalysis modification.

It belongs to the NAPRTase family. Post-translationally, transiently phosphorylated on a His residue during the reaction cycle. Phosphorylation strongly increases the affinity for substrates and increases the rate of nicotinate D-ribonucleotide production. Dephosphorylation regenerates the low-affinity form of the enzyme, leading to product release.

It carries out the reaction nicotinate + 5-phospho-alpha-D-ribose 1-diphosphate + ATP + H2O = nicotinate beta-D-ribonucleotide + ADP + phosphate + diphosphate. It participates in cofactor biosynthesis; NAD(+) biosynthesis; nicotinate D-ribonucleotide from nicotinate: step 1/1. Its function is as follows. Catalyzes the synthesis of beta-nicotinate D-ribonucleotide from nicotinate and 5-phospho-D-ribose 1-phosphate at the expense of ATP. In Pectobacterium atrosepticum (strain SCRI 1043 / ATCC BAA-672) (Erwinia carotovora subsp. atroseptica), this protein is Nicotinate phosphoribosyltransferase.